The chain runs to 431 residues: E3 ubiquitin-protein ligase RNF128 (431 aa).

Residues 1 to 38 (MGQLPGAGVFCRGGCGFSRLLAWCFLLVLSPQTPGSRG) form the signal peptide. 3 N-linked (GlcNAc...) asparagine glycosylation sites follow: asparagine 48, asparagine 59, and asparagine 101. Residues 75-186 (SPLEPVAGVL…LKGTKILQSI (112 aa)) form the PA domain. The helical transmembrane segment at 211–231 (IFFVSVSFFIITAATVGYFIF) threads the bilayer. An RING-type; atypical zinc finger spans residues 280–321 (CAVCIELYKPNDLVRILTCNHVFHKTCVDPWLLEHRTCPMCK). Over residues 345–354 (VSNETSSNAS) the composition is skewed to polar residues. Residues 345–431 (VSNETSSNAS…QETTVREIKS (87 aa)) are disordered.

Auto-ubiquitinated. Controls the development of T-cell clonal anergy by ubiquitination.

The protein resides in the cytoplasm. The protein localises to the endomembrane system. It localises to the cytoskeleton. It is found in the perinuclear region. It catalyses the reaction S-ubiquitinyl-[E2 ubiquitin-conjugating enzyme]-L-cysteine + [acceptor protein]-L-lysine = [E2 ubiquitin-conjugating enzyme]-L-cysteine + N(6)-ubiquitinyl-[acceptor protein]-L-lysine.. It functions in the pathway protein modification; protein ubiquitination. Its function is as follows. E3 ubiquitin-protein ligase that catalyzes 'Lys-27', 'Lys-48'- or 'Lys-63'-linked polyubiquitin chains formation and plays a role in different biological processes such as modulation of immune response, cytoskeletal dynamics or protein homeostasis. Inhibits IL2 and IL4 transcription, thereby playing an important role in the induction of the anergic phenotype, a long-term stable state of T-lymphocyte unresponsiveness to antigenic stimulation associated with the blockade of interleukin production. Ubiquitinates ARPC5 with 'Lys-48' linkages and COR1A with 'Lys-63' linkages leading to their degradation, down-regulation of these cytoskeletal components results in impaired lamellipodium formation and reduced accumulation of F-actin at the immunological synapse. Functions in the patterning of the dorsal ectoderm; sensitizes ectoderm to respond to neural-inducing signals. Plays a positive role in innate immune response by promoting 'Lys-63'-linked ubiquitination of TBK1 after RNA- or DNA-virus infection. Regulates alveolar macrophage activation and neutrophil infiltration by interacting with TLR4, targeting it for degradation, and inhibiting NF-kappa-B activation, hence decreasing pro-inflammatory cytokines. Negatively regulates the IL-3/STAT5 signaling pathway by facilitating 'Lys-27'-linked polyubiquitination of IL3RA leading to its degradation via lysosomal pathway. Directly regulates the N-glycosylation process in the endoplasmic reticulum by targeting the glycosyl-transferase RPN1 for ubiquitination and degradation. Other substrates targeted for degradation by RNF128 include transmembrane proteins CD40L, CD83 or the tetraspanin CD151. The sequence is that of E3 ubiquitin-protein ligase RNF128 (RNF128) from Bos taurus (Bovine).